The chain runs to 371 residues: Chaperone protein DnaJ (371 aa).

The region spanning 5-69 (DYYEVLGLSK…QKRAQYDQFG (65 aa)) is the J domain. The segment at 133-215 (GKELNVEIPV…CHGSGKVRKR (83 aa)) adopts a CR-type zinc-finger fold. Zn(2+) contacts are provided by C146, C149, C163, C166, C189, C192, C203, and C206. CXXCXGXG motif repeat units lie at residues 146–153 (CDTCKGSG), 163–170 (CKHCSGSG), 189–196 (CSHCSGTG), and 203–210 (CTTCHGSG).

This sequence belongs to the DnaJ family. As to quaternary structure, homodimer. Requires Zn(2+) as cofactor.

Its subcellular location is the cytoplasm. Functionally, participates actively in the response to hyperosmotic and heat shock by preventing the aggregation of stress-denatured proteins and by disaggregating proteins, also in an autonomous, DnaK-independent fashion. Unfolded proteins bind initially to DnaJ; upon interaction with the DnaJ-bound protein, DnaK hydrolyzes its bound ATP, resulting in the formation of a stable complex. GrpE releases ADP from DnaK; ATP binding to DnaK triggers the release of the substrate protein, thus completing the reaction cycle. Several rounds of ATP-dependent interactions between DnaJ, DnaK and GrpE are required for fully efficient folding. Also involved, together with DnaK and GrpE, in the DNA replication of plasmids through activation of initiation proteins. In Bacillus cereus (strain AH820), this protein is Chaperone protein DnaJ.